A 450-amino-acid polypeptide reads, in one-letter code: tRNA-2-methylthio-N(6)-dimethylallyladenosine synthase (450 aa).

The region spanning 7-127 (KRLYIKTYGC…LPELIARAHR (121 aa)) is the MTTase N-terminal domain. The [4Fe-4S] cluster site is built by Cys16, Cys52, Cys90, Cys165, Cys169, and Cys172. One can recognise a Radical SAM core domain in the interval 151 to 378 (QVSGVSAFLT…NQLLDEQQKA (228 aa)). The TRAM domain occupies 381 to 443 (ILQVGKTMPV…KMSLGGVLET (63 aa)).

It belongs to the methylthiotransferase family. MiaB subfamily. In terms of assembly, monomer. [4Fe-4S] cluster is required as a cofactor.

Its subcellular location is the cytoplasm. The catalysed reaction is N(6)-dimethylallyladenosine(37) in tRNA + (sulfur carrier)-SH + AH2 + 2 S-adenosyl-L-methionine = 2-methylsulfanyl-N(6)-dimethylallyladenosine(37) in tRNA + (sulfur carrier)-H + 5'-deoxyadenosine + L-methionine + A + S-adenosyl-L-homocysteine + 2 H(+). In terms of biological role, catalyzes the methylthiolation of N6-(dimethylallyl)adenosine (i(6)A), leading to the formation of 2-methylthio-N6-(dimethylallyl)adenosine (ms(2)i(6)A) at position 37 in tRNAs that read codons beginning with uridine. The polypeptide is tRNA-2-methylthio-N(6)-dimethylallyladenosine synthase (Caulobacter sp. (strain K31)).